A 130-amino-acid chain; its full sequence is Small ribosomal subunit protein uS11c (130 aa).

Belongs to the universal ribosomal protein uS11 family. In terms of assembly, part of the 30S ribosomal subunit.

Its subcellular location is the plastid. The protein resides in the chloroplast. In Nephroselmis olivacea (Green alga), this protein is Small ribosomal subunit protein uS11c.